Consider the following 175-residue polypeptide: Threonylcarbamoyl-AMP synthase (175 aa).

Positions 1–175 (MLHNDDVIAY…IINGKLIRYV (175 aa)) constitute a YrdC-like domain.

The protein belongs to the SUA5 family. TsaC subfamily.

Its subcellular location is the cytoplasm. It catalyses the reaction L-threonine + hydrogencarbonate + ATP = L-threonylcarbamoyladenylate + diphosphate + H2O. Its function is as follows. Required for the formation of a threonylcarbamoyl group on adenosine at position 37 (t(6)A37) in tRNAs that read codons beginning with adenine. Catalyzes the conversion of L-threonine, HCO(3)(-)/CO(2) and ATP to give threonylcarbamoyl-AMP (TC-AMP) as the acyladenylate intermediate, with the release of diphosphate. This Buchnera aphidicola subsp. Acyrthosiphon pisum (strain APS) (Acyrthosiphon pisum symbiotic bacterium) protein is Threonylcarbamoyl-AMP synthase.